A 284-amino-acid chain; its full sequence is Acetylglutamate kinase (284 aa).

Substrate contacts are provided by residues 64–65 (GG), arginine 86, and asparagine 179.

This sequence belongs to the acetylglutamate kinase family. ArgB subfamily.

It localises to the cytoplasm. The enzyme catalyses N-acetyl-L-glutamate + ATP = N-acetyl-L-glutamyl 5-phosphate + ADP. It functions in the pathway amino-acid biosynthesis; L-arginine biosynthesis; N(2)-acetyl-L-ornithine from L-glutamate: step 2/4. Its function is as follows. Catalyzes the ATP-dependent phosphorylation of N-acetyl-L-glutamate. This is Acetylglutamate kinase from Acaryochloris marina (strain MBIC 11017).